A 330-amino-acid polypeptide reads, in one-letter code: Methionyl-tRNA formyltransferase (330 aa).

Residue 116–119 (SLLP) participates in (6S)-5,6,7,8-tetrahydrofolate binding.

Belongs to the Fmt family.

The catalysed reaction is L-methionyl-tRNA(fMet) + (6R)-10-formyltetrahydrofolate = N-formyl-L-methionyl-tRNA(fMet) + (6S)-5,6,7,8-tetrahydrofolate + H(+). Attaches a formyl group to the free amino group of methionyl-tRNA(fMet). The formyl group appears to play a dual role in the initiator identity of N-formylmethionyl-tRNA by promoting its recognition by IF2 and preventing the misappropriation of this tRNA by the elongation apparatus. In Nitratidesulfovibrio vulgaris (strain ATCC 29579 / DSM 644 / CCUG 34227 / NCIMB 8303 / VKM B-1760 / Hildenborough) (Desulfovibrio vulgaris), this protein is Methionyl-tRNA formyltransferase.